Here is a 360-residue protein sequence, read N- to C-terminus: Cannabinoid receptor 2 (360 aa).

Over 1 to 33 (MAGCRELELTNGSNGGLEFNPMKEYMILSDAQQ) the chain is Extracellular. N-linked (GlcNAc...) asparagine glycosylation is present at asparagine 11. A helical membrane pass occupies residues 34–59 (IAVAVLCTLMGLLSALENVAVLYLIL). Topologically, residues 60 to 71 (SSQRLRRKPSYL) are cytoplasmic. A helical membrane pass occupies residues 72–92 (FIGSLAGADFLASVIFACNFV). Over 93–104 (IFHVFHGVDSRN) the chain is Extracellular. The chain crosses the membrane as a helical span at residues 105–129 (IFLLKIGSVTMTFTASVGSLLLTAV). At 130–149 (DRYLCLCYPPTYKALVTRGR) the chain is on the cytoplasmic side. A helical transmembrane segment spans residues 150 to 172 (ALVALGVMWVLSALISYLPLMGW). The Extracellular portion of the chain corresponds to 173–188 (TCCPSPCSELFPLIPN). Residues 189–214 (DYLLGWLLFIAILFSGIIYTYGYVLW) traverse the membrane as a helical segment. Residues 215 to 246 (KAHQHVASLAEHQDRQVPGIARMRLDVRLAKT) are Cytoplasmic-facing. The helical transmembrane segment at 247-267 (LGLVMAVLLICWFPALALMGH) threads the bilayer. The Extracellular segment spans residues 268-279 (SLVTTLSDKVKE). Residues 280 to 301 (AFAFCSMLCLVNSMINPIIYAL) traverse the membrane as a helical segment. Residues 302 to 360 (RSGEIRSAAQHCLTGWKKYLQGLGSEGKEEAPKSSVTETEAEVKTTTGPGSRTPGCSNC) are Cytoplasmic-facing. The tract at residues 327-360 (EGKEEAPKSSVTETEAEVKTTTGPGSRTPGCSNC) is disordered. Serine 335 and serine 336 each carry phosphoserine. Threonine 338 bears the Phosphothreonine mark. Residues 349 to 360 (GPGSRTPGCSNC) show a composition bias toward polar residues. Residue serine 352 is modified to Phosphoserine.

This sequence belongs to the G-protein coupled receptor 1 family. In terms of processing, constitutively phosphorylated on Ser-352; phosphorylation increases cell internalization and desensitizes the receptor. As to expression, expressed in spleen and brain by neurons and glial cells (at protein level). Expressed in lung, testis and thymus but not in heart, liver or kidney. Expressed in cerebellum, cortex and brainstem.

Its subcellular location is the cell membrane. It localises to the cell projection. The protein resides in the dendrite. It is found in the perikaryon. In terms of biological role, heterotrimeric G protein-coupled receptor for endocannabinoid 2-arachidonoylglycerol mediating inhibition of adenylate cyclase. May function in inflammatory response, nociceptive transmission and bone homeostasis. The sequence is that of Cannabinoid receptor 2 (Cnr2) from Rattus norvegicus (Rat).